A 1196-amino-acid polypeptide reads, in one-letter code: DNA-directed RNA polymerase subunit beta (1196 aa).

Belongs to the RNA polymerase beta chain family. In terms of assembly, the RNAP catalytic core consists of 2 alpha, 1 beta, 1 beta' and 1 omega subunit. When a sigma factor is associated with the core the holoenzyme is formed, which can initiate transcription.

It carries out the reaction RNA(n) + a ribonucleoside 5'-triphosphate = RNA(n+1) + diphosphate. DNA-dependent RNA polymerase catalyzes the transcription of DNA into RNA using the four ribonucleoside triphosphates as substrates. The chain is DNA-directed RNA polymerase subunit beta from Lactococcus lactis subsp. cremoris (strain MG1363).